A 257-amino-acid polypeptide reads, in one-letter code: UPF0246 protein A1S_2267 (257 aa).

This sequence belongs to the UPF0246 family.

In Acinetobacter baumannii (strain ATCC 17978 / DSM 105126 / CIP 53.77 / LMG 1025 / NCDC KC755 / 5377), this protein is UPF0246 protein A1S_2267.